A 279-amino-acid polypeptide reads, in one-letter code: Tryptophan synthase alpha chain (279 aa).

Residues E50 and D61 each act as proton acceptor in the active site.

Belongs to the TrpA family. Tetramer of two alpha and two beta chains.

The enzyme catalyses (1S,2R)-1-C-(indol-3-yl)glycerol 3-phosphate + L-serine = D-glyceraldehyde 3-phosphate + L-tryptophan + H2O. It functions in the pathway amino-acid biosynthesis; L-tryptophan biosynthesis; L-tryptophan from chorismate: step 5/5. The alpha subunit is responsible for the aldol cleavage of indoleglycerol phosphate to indole and glyceraldehyde 3-phosphate. This chain is Tryptophan synthase alpha chain, found in Rhizobium meliloti (strain 1021) (Ensifer meliloti).